We begin with the raw amino-acid sequence, 267 residues long: MSRLTSTFQVLRHANRKALIPFITAGDPEPGFTVPVMHAMVEAGADVIELGVPFSDPMADGPVIQKASERALVHHMSLGKTLDLVAEFRRADRTTPIVLMGYLNPVECMGYQRFVDRAKDAGVDGVLTVDMPPEEAGEFVPMLHRAGLDPIFLLAPNSSDARVQRMAALGRGYLYYVSLKGVTGASHLDLAEVESRIAHIRSLTDLPIGVGFGVKNAETAAAIGRFADAVVVGSALVEKIAAAQDRPEQARKDIVDLLAVMRRALDA.

Residues glutamate 49 and aspartate 60 each act as proton acceptor in the active site.

This sequence belongs to the TrpA family. Tetramer of two alpha and two beta chains.

The enzyme catalyses (1S,2R)-1-C-(indol-3-yl)glycerol 3-phosphate + L-serine = D-glyceraldehyde 3-phosphate + L-tryptophan + H2O. Its pathway is amino-acid biosynthesis; L-tryptophan biosynthesis; L-tryptophan from chorismate: step 5/5. Its function is as follows. The alpha subunit is responsible for the aldol cleavage of indoleglycerol phosphate to indole and glyceraldehyde 3-phosphate. The protein is Tryptophan synthase alpha chain of Methylococcus capsulatus (strain ATCC 33009 / NCIMB 11132 / Bath).